The chain runs to 328 residues: MGQLIDGVWHDTWYDTKSTGGKFQRSASAFRNWLTADGAPGPTGTGGFIAEKDRYHLYVSLACPWAHRTLIMRKLKGLEPFISVSVVNPLMLENGWTFDDSFPGATGDTLYQNEFLYQLYLHADPHYSGRVTVPVLWDKKNHTIVSNESAEIIRMFNTAFDALGAKAGDYYPPALQTKIDELNGWIYDTVNNGVYKAGFATSQEAYDEAVAKVFESLARLEQILGQHRYLTGNQLTEADIRLWTTLVRFDPVYVTHFKCDKHRISDYLNLYGFLRDIYQMPGIAETVNFDHIRNHYFRSHKTINPTGIISIGPWQDLDEPHGRDVRFG.

Cysteine 63 serves as the catalytic Nucleophile. Residues tryptophan 96, 130-133 (RVTV), and 148-149 (ES) contribute to the glutathione site. Positions 172 to 296 (PPALQTKIDE…VNFDHIRNHY (125 aa)) constitute a GST C-terminal domain. Tyrosine 195 acts as the Proton donor/acceptor in catalysis. Residues 203–311 (QEAYDEAVAK…TINPTGIISI (109 aa)) form a dimerization region.

Belongs to the GST superfamily. Xi-class GSH transferase family. As to quaternary structure, homodimer.

The catalysed reaction is 2-(glutathione-S-yl)-hydroquinone + glutathione = hydroquinone + glutathione disulfide. Catalyzes glutathione (GSH)-dependent reduction of glutathionyl-hydroquinones (GS-HQs) to the corresponding hydroquinones. Can use a variety of GS-HQs as substrates, such as GS-p-hydroquinone (GS-HQ), GS-hydroxy-p-hydroquinone (GS-HHQ), GS-methyl-p-hydroquinone (GS-MHQ), GS-menadiol, and GS-trichloro-p-hydroquinone (GS-TriCH). Also displays GSH-dependent disulfide-bond reduction activity toward HED (2-hydroxyethyl disulfide), and is able to catalyze DMA (dimethylarsinate) reduction. Exhibits no GSH transferase activity with 1-chloro-2,4-dinitrobenzene (CDNB). The polypeptide is Glutathionyl-hydroquinone reductase YqjG (yqjG) (Escherichia coli (strain K12)).